The primary structure comprises 241 residues: Demethylmenaquinone methyltransferase (241 aa).

S-adenosyl-L-methionine contacts are provided by residues Thr-60, Asp-81, and 106-107 (DA).

The protein belongs to the class I-like SAM-binding methyltransferase superfamily. MenG/UbiE family.

It carries out the reaction a 2-demethylmenaquinol + S-adenosyl-L-methionine = a menaquinol + S-adenosyl-L-homocysteine + H(+). It functions in the pathway quinol/quinone metabolism; menaquinone biosynthesis; menaquinol from 1,4-dihydroxy-2-naphthoate: step 2/2. In terms of biological role, methyltransferase required for the conversion of demethylmenaquinol (DMKH2) to menaquinol (MKH2). This Staphylococcus aureus (strain MRSA252) protein is Demethylmenaquinone methyltransferase.